A 231-amino-acid chain; its full sequence is Large ribosomal subunit protein uL1 (231 aa).

The protein belongs to the universal ribosomal protein uL1 family. As to quaternary structure, part of the 50S ribosomal subunit.

Functionally, binds directly to 23S rRNA. The L1 stalk is quite mobile in the ribosome, and is involved in E site tRNA release. Protein L1 is also a translational repressor protein, it controls the translation of the L11 operon by binding to its mRNA. In Alcanivorax borkumensis (strain ATCC 700651 / DSM 11573 / NCIMB 13689 / SK2), this protein is Large ribosomal subunit protein uL1.